Here is a 585-residue protein sequence, read N- to C-terminus: ADP-ribosylation factor-binding protein GGA2 (585 aa).

Residues 33–169 (ACRMSLAEPD…LLKYKGYAFP (137 aa)) enclose the VHS domain. Residues K180 and K287 each participate in a glycyl lysine isopeptide (Lys-Gly) (interchain with G-Cter in ubiquitin) cross-link. Residues 196–321 (EIAQAAKLEE…LLEKFNLLKN (126 aa)) enclose the GAT domain. The segment at 358–378 (LDEAPSQGNNNTNGTGTPAAA) is disordered. A compositionally biased stretch (low complexity) spans 365 to 374 (GNNNTNGTGT). One can recognise a GAE domain in the interval 466–581 (TTTAPARTLV…TQAEETAVFT (116 aa)).

As to quaternary structure, binds to ARF1 and ARF2.

The protein resides in the golgi apparatus. Its subcellular location is the trans-Golgi network. May play a role in the regulation of membrane traffic through the trans-Golgi network. This Saccharomyces cerevisiae (strain ATCC 204508 / S288c) (Baker's yeast) protein is ADP-ribosylation factor-binding protein GGA2 (GGA2).